The following is a 215-amino-acid chain: Phosphoserine phosphatase (215 aa).

Asp11 functions as the Nucleophile in the catalytic mechanism. Asp11 and Asp13 together coordinate Mg(2+). The Proton donor role is filled by Asp13. Substrate contacts are provided by residues Glu20, Arg56, 99–100, and Lys144; that span reads SG. Asp167 is a binding site for Mg(2+). Residue Asn170 participates in substrate binding.

Belongs to the HAD-like hydrolase superfamily. SerB family. Mg(2+) serves as cofactor.

The enzyme catalyses O-phospho-L-serine + H2O = L-serine + phosphate. It catalyses the reaction O-phospho-D-serine + H2O = D-serine + phosphate. It functions in the pathway amino-acid biosynthesis; L-serine biosynthesis; L-serine from 3-phospho-D-glycerate: step 3/3. The sequence is that of Phosphoserine phosphatase from Streptococcus thermophilus (strain ATCC BAA-250 / LMG 18311).